Consider the following 164-residue polypeptide: Photosystem II extrinsic protein V (164 aa).

An N-terminal signal peptide occupies residues 1 to 27; the sequence is MIPNRKIQLSLFAVIIVFETLLNQVYA. Residues C64, C67, H68, and M131 each contribute to the heme c site.

This sequence belongs to the cytochrome c family. PsbV subfamily. In terms of assembly, PSII is composed of 1 copy each of membrane proteins PsbA, PsbB, PsbC, PsbD, PsbE, PsbF, PsbH, PsbI, PsbJ, PsbK, PsbL, PsbM, PsbT, PsbY, PsbZ, Psb30/Ycf12, at least 3 peripheral proteins of the oxygen-evolving complex and a large number of cofactors. It forms dimeric complexes. The extrinsic subunits in red algae are PsbO (OEC33), PsbQ', cytochrome c-550 and PsbU. Heme c is required as a cofactor.

The protein resides in the plastid. It localises to the chloroplast thylakoid membrane. Functionally, one of the extrinsic, lumenal subunits of photosystem II (PSII). PSII is a light-driven water plastoquinone oxidoreductase, using light energy to abstract electrons from H(2)O, generating a proton gradient subsequently used for ATP formation. The extrinsic proteins stabilize the structure of photosystem II oxygen-evolving complex (OEC), the ion environment of oxygen evolution and protect the OEC against heat-induced inactivation. The polypeptide is Photosystem II extrinsic protein V (Gracilaria tenuistipitata var. liui (Red alga)).